A 240-amino-acid polypeptide reads, in one-letter code: Sugar fermentation stimulation protein homolog (240 aa).

This sequence belongs to the SfsA family.

The polypeptide is Sugar fermentation stimulation protein homolog (Methanothermobacter thermautotrophicus (strain ATCC 29096 / DSM 1053 / JCM 10044 / NBRC 100330 / Delta H) (Methanobacterium thermoautotrophicum)).